Here is a 365-residue protein sequence, read N- to C-terminus: Probable receptor-like protein kinase At2g47060 (365 aa).

The tract at residues 18 to 48 is disordered; that stretch reads DYGGRHNQAKHFPPGNDARHHQASETAQKGP. A Protein kinase domain is found at 73 to 353; it reads FGSNSLIGEG…IVVKALQPLL (281 aa). Residues 79-87 and K101 each bind ATP; that span reads IGEGSYGRV. A Phosphotyrosine modification is found at Y145. D203 serves as the catalytic Proton acceptor. Residues S207 and S237 each carry the phosphoserine modification. 2 positions are modified to phosphothreonine: T238 and T243. Residue Y251 is modified to Phosphotyrosine.

It belongs to the protein kinase superfamily. Ser/Thr protein kinase family.

It carries out the reaction L-seryl-[protein] + ATP = O-phospho-L-seryl-[protein] + ADP + H(+). It catalyses the reaction L-threonyl-[protein] + ATP = O-phospho-L-threonyl-[protein] + ADP + H(+). This Arabidopsis thaliana (Mouse-ear cress) protein is Probable receptor-like protein kinase At2g47060.